A 264-amino-acid chain; its full sequence is Hydroxyethylthiazole kinase (264 aa).

Residue Met45 participates in substrate binding. ATP is bound by residues Arg121 and Ser167. Gly194 contacts substrate.

The protein belongs to the Thz kinase family. Mg(2+) is required as a cofactor.

The catalysed reaction is 5-(2-hydroxyethyl)-4-methylthiazole + ATP = 4-methyl-5-(2-phosphooxyethyl)-thiazole + ADP + H(+). It participates in cofactor biosynthesis; thiamine diphosphate biosynthesis; 4-methyl-5-(2-phosphoethyl)-thiazole from 5-(2-hydroxyethyl)-4-methylthiazole: step 1/1. In terms of biological role, catalyzes the phosphorylation of the hydroxyl group of 4-methyl-5-beta-hydroxyethylthiazole (THZ). This is Hydroxyethylthiazole kinase from Aliivibrio salmonicida (strain LFI1238) (Vibrio salmonicida (strain LFI1238)).